The following is a 305-amino-acid chain: Nitrogen assimilation regulatory protein nac (305 aa).

Positions 1-58 (MNLRRLKYFVKIVDIGSLTQAAEVLHIAQPALSQQVATLEGEMDQQLLIRTKRGVTPT) constitute an HTH lysR-type domain. The H-T-H motif DNA-binding region spans 18 to 37 (LTQAAEVLHIAQPALSQQVA).

It belongs to the LysR transcriptional regulatory family.

In terms of biological role, transcriptional activator for the hut, put and ure operons and repressor for the gdh and gltB operons in response to nitrogen limitation. Negative regulator of its own expression. In Klebsiella aerogenes (Enterobacter aerogenes), this protein is Nitrogen assimilation regulatory protein nac (nac).